A 223-amino-acid polypeptide reads, in one-letter code: UPF0441 protein YgiB (223 aa).

Residues 178 to 195 (TVPKTAMAPKPATTTTVT) are compositionally biased toward low complexity. Positions 178-223 (TVPKTAMAPKPATTTTVTRGGFGESVAKQSTLQRSATGTSSRSMGG) are disordered. Over residues 204–223 (AKQSTLQRSATGTSSRSMGG) the composition is skewed to polar residues.

This sequence belongs to the UPF0441 family.

The chain is UPF0441 protein YgiB from Escherichia coli (strain ATCC 8739 / DSM 1576 / NBRC 3972 / NCIMB 8545 / WDCM 00012 / Crooks).